We begin with the raw amino-acid sequence, 67 residues long: Cell division protein ZapB (67 aa).

The stretch at 3 to 59 (LELLSKLETKIQAALETIELLKMELEEEKQTSSSLSEQNQQLQQELTSWNEKVTGLV) forms a coiled coil.

This sequence belongs to the ZapB family. Homodimer. The ends of the coiled-coil dimer bind to each other, forming polymers. Interacts with FtsZ.

The protein localises to the cytoplasm. Its function is as follows. Non-essential, abundant cell division factor that is required for proper Z-ring formation. It is recruited early to the divisome by direct interaction with FtsZ, stimulating Z-ring assembly and thereby promoting cell division earlier in the cell cycle. Its recruitment to the Z-ring requires functional FtsA or ZipA. This is Cell division protein ZapB from Shewanella halifaxensis (strain HAW-EB4).